The primary structure comprises 218 residues: Adenylate kinase (218 aa).

10-15 (GAGKGT) is a binding site for ATP. Residues 30-59 (STGDMLRAAVKAQSELGMAAKKVMDEGGLV) are NMP. AMP contacts are provided by residues T31, R36, 57-59 (GLV), 85-88 (GFPR), and Q92. The segment at 122–159 (GRRVHPASGRTYHIVFNPPAVEGKDDVTGEDLVQRDDD) is LID. Residues R123 and 132 to 133 (TY) contribute to the ATP site. AMP is bound by residues R156 and R167. ATP is bound at residue G203.

It belongs to the adenylate kinase family. In terms of assembly, monomer.

The protein localises to the cytoplasm. It carries out the reaction AMP + ATP = 2 ADP. The protein operates within purine metabolism; AMP biosynthesis via salvage pathway; AMP from ADP: step 1/1. In terms of biological role, catalyzes the reversible transfer of the terminal phosphate group between ATP and AMP. Plays an important role in cellular energy homeostasis and in adenine nucleotide metabolism. The chain is Adenylate kinase from Chlorobaculum parvum (strain DSM 263 / NCIMB 8327) (Chlorobium vibrioforme subsp. thiosulfatophilum).